A 533-amino-acid polypeptide reads, in one-letter code: (E)-beta-farnesene synthase (533 aa).

Asp-286, Asp-290, Asn-430, Ser-434, and Glu-438 together coordinate Mg(2+). A DDXXD motif motif is present at residues 286-290 (DDMMD).

This sequence belongs to the terpene synthase family. Mg(2+) serves as cofactor. Co(2+) is required as a cofactor. The cofactor is Mn(2+).

Its subcellular location is the cytoplasm. The enzyme catalyses (2E,6E)-farnesyl diphosphate = (E)-beta-farnesene + diphosphate. Its pathway is secondary metabolite biosynthesis; terpenoid biosynthesis. Sesquiterpene cyclase catalyzing the production of sixfold more beta-farnesene than alpha-bergamotene from farnesyl diphosphate. Involved in indirect defense by producing volatile signals attracting natural enemies of herbivores. The protein is (E)-beta-farnesene synthase of Zea diploperennis (Diploperennial teosinte).